Reading from the N-terminus, the 220-residue chain is Large ribosomal subunit protein uL3 (220 aa).

Residues Ser-132–Gln-153 form a disordered region. Polar residues predominate over residues Gly-133–Val-145. Position 153 is an N5-methylglutamine (Gln-153).

It belongs to the universal ribosomal protein uL3 family. As to quaternary structure, part of the 50S ribosomal subunit. Forms a cluster with proteins L14 and L19. Methylated by PrmB.

Its function is as follows. One of the primary rRNA binding proteins, it binds directly near the 3'-end of the 23S rRNA, where it nucleates assembly of the 50S subunit. The protein is Large ribosomal subunit protein uL3 of Ralstonia nicotianae (strain ATCC BAA-1114 / GMI1000) (Ralstonia solanacearum).